The sequence spans 157 residues: Large ribosomal subunit protein uL15 (157 aa).

Residues 1–13 (MKLNDLRDKDGAT) are compositionally biased toward basic and acidic residues. Residues 1–39 (MKLNDLRDKDGATHSKKRLGRGIGSGSGKTAGRGVKGQK) are disordered. Over residues 21–35 (RGIGSGSGKTAGRGV) the composition is skewed to gly residues.

The protein belongs to the universal ribosomal protein uL15 family. Part of the 50S ribosomal subunit.

Functionally, binds to the 23S rRNA. This Mesorhizobium japonicum (strain LMG 29417 / CECT 9101 / MAFF 303099) (Mesorhizobium loti (strain MAFF 303099)) protein is Large ribosomal subunit protein uL15.